Consider the following 490-residue polypeptide: Aspartyl/glutamyl-tRNA(Asn/Gln) amidotransferase subunit B (490 aa).

Belongs to the GatB/GatE family. GatB subfamily. Heterotrimer of A, B and C subunits.

It catalyses the reaction L-glutamyl-tRNA(Gln) + L-glutamine + ATP + H2O = L-glutaminyl-tRNA(Gln) + L-glutamate + ADP + phosphate + H(+). The catalysed reaction is L-aspartyl-tRNA(Asn) + L-glutamine + ATP + H2O = L-asparaginyl-tRNA(Asn) + L-glutamate + ADP + phosphate + 2 H(+). In terms of biological role, allows the formation of correctly charged Asn-tRNA(Asn) or Gln-tRNA(Gln) through the transamidation of misacylated Asp-tRNA(Asn) or Glu-tRNA(Gln) in organisms which lack either or both of asparaginyl-tRNA or glutaminyl-tRNA synthetases. The reaction takes place in the presence of glutamine and ATP through an activated phospho-Asp-tRNA(Asn) or phospho-Glu-tRNA(Gln). This chain is Aspartyl/glutamyl-tRNA(Asn/Gln) amidotransferase subunit B, found in Burkholderia mallei (strain NCTC 10247).